Here is a 467-residue protein sequence, read N- to C-terminus: 3-isopropylmalate dehydratase large subunit (467 aa).

[4Fe-4S] cluster-binding residues include Cys-348, Cys-409, and Cys-412.

This sequence belongs to the aconitase/IPM isomerase family. LeuC type 1 subfamily. Heterodimer of LeuC and LeuD. [4Fe-4S] cluster serves as cofactor.

The enzyme catalyses (2R,3S)-3-isopropylmalate = (2S)-2-isopropylmalate. It functions in the pathway amino-acid biosynthesis; L-leucine biosynthesis; L-leucine from 3-methyl-2-oxobutanoate: step 2/4. Catalyzes the isomerization between 2-isopropylmalate and 3-isopropylmalate, via the formation of 2-isopropylmaleate. The protein is 3-isopropylmalate dehydratase large subunit of Thiobacillus denitrificans (strain ATCC 25259 / T1).